A 129-amino-acid polypeptide reads, in one-letter code: MAREPGRVRRRERKNITSGVAHVNASFNNTMITITDAQGNAISWSSAGMMGFKGSRKSTPYAAQVAADDAGRKAAEHGVRTLEVEVKGPGSGRESALRALQAVGFTITSIRDVTPIPHNGVRPSKRRRV.

This sequence belongs to the universal ribosomal protein uS11 family. As to quaternary structure, part of the 30S ribosomal subunit. Interacts with proteins S7 and S18. Binds to IF-3.

Its function is as follows. Located on the platform of the 30S subunit, it bridges several disparate RNA helices of the 16S rRNA. Forms part of the Shine-Dalgarno cleft in the 70S ribosome. The sequence is that of Small ribosomal subunit protein uS11 from Erythrobacter litoralis (strain HTCC2594).